The primary structure comprises 235 residues: Class B acid phosphatase (235 aa).

A signal peptide spans 1 to 22; it reads MKNLVKLSLIAMLTAATLPAMA. Asp-67 functions as the Nucleophile in the catalytic mechanism. Asp-67 and Asp-69 together coordinate Mg(2+). Asp-69 (proton donor) is an active-site residue. Substrate contacts are provided by residues 135-136 and Lys-175; that span reads TG. Asp-190 is a binding site for Mg(2+).

It belongs to the class B bacterial acid phosphatase family. Homotetramer. Mg(2+) is required as a cofactor.

The protein localises to the periplasm. It catalyses the reaction a phosphate monoester + H2O = an alcohol + phosphate. Dephosphorylates several organic phosphate monoesters. Also has a phosphotransferase activity catalyzing the transfer of low-energy phosphate groups from organic phosphate monoesters to free hydroxyl groups of various organic compounds. The sequence is that of Class B acid phosphatase from Aggregatibacter actinomycetemcomitans serotype C (strain D11S-1) (Actinobacillus actinomycetemcomitans).